A 132-amino-acid polypeptide reads, in one-letter code: Small ribosomal subunit protein uS8 (132 aa).

The protein belongs to the universal ribosomal protein uS8 family. In terms of assembly, part of the 30S ribosomal subunit. Contacts proteins S5 and S12.

In terms of biological role, one of the primary rRNA binding proteins, it binds directly to 16S rRNA central domain where it helps coordinate assembly of the platform of the 30S subunit. The chain is Small ribosomal subunit protein uS8 from Tropheryma whipplei (strain Twist) (Whipple's bacillus).